The sequence spans 198 residues: NADH-quinone oxidoreductase subunit C (198 aa).

Belongs to the complex I 30 kDa subunit family. As to quaternary structure, NDH-1 is composed of 14 different subunits. Subunits NuoB, C, D, E, F, and G constitute the peripheral sector of the complex.

The protein resides in the cell inner membrane. The catalysed reaction is a quinone + NADH + 5 H(+)(in) = a quinol + NAD(+) + 4 H(+)(out). Its function is as follows. NDH-1 shuttles electrons from NADH, via FMN and iron-sulfur (Fe-S) centers, to quinones in the respiratory chain. The immediate electron acceptor for the enzyme in this species is believed to be ubiquinone. Couples the redox reaction to proton translocation (for every two electrons transferred, four hydrogen ions are translocated across the cytoplasmic membrane), and thus conserves the redox energy in a proton gradient. The sequence is that of NADH-quinone oxidoreductase subunit C from Janthinobacterium sp. (strain Marseille) (Minibacterium massiliensis).